We begin with the raw amino-acid sequence, 251 residues long: Maleate isomerase (251 aa).

Substrate-binding positions include asparagine 14, 76-78 (CLV), tyrosine 133, and asparagine 163. Cysteine 76 serves as the catalytic Nucleophile. An S-(2-succinyl)cysteine modification is found at cysteine 76. Cysteine 194 functions as the Proton donor in the catalytic mechanism. 195–196 (VQ) provides a ligand contact to substrate.

It belongs to the maleate isomerase family. Homodimer.

It catalyses the reaction maleate = fumarate. Functionally, catalyzes cis-trans isomerization of the C2-C3 double bond in maleate to yield fumarate. Shows a strict specificity for maleate, with no activity detected toward structurally related substrates including citraconate, mesaconate, dimethylmaleate, and maleamide. This Nocardia farcinica (strain IFM 10152) protein is Maleate isomerase.